Reading from the N-terminus, the 5148-residue chain is E3 ubiquitin-protein ligase RNF213 (5148 aa).

The span at 38–48 (DNTLVVSSTPE) shows a compositional bias: polar residues. Residues 38-341 (DNTLVVSSTP…QAAAPEPTSA (304 aa)) form a disordered region. Residues 69–78 (PGKELEKPEE) are compositionally biased toward basic and acidic residues. A compositionally biased stretch (polar residues) spans 101-113 (GTISSSEAPSSGL). Low complexity predominate over residues 130-146 (PQNQAQQGGAASQPGHP). Phosphoserine is present on serine 196. Basic and acidic residues-rich tracts occupy residues 233–245 (SKGE…KKVP), 257–267 (AGKETGEDVRK), and 279–289 (KHGDQEAELKG). Positions 319–335 (AAAVKTQQAAAPQQAAA) are enriched in low complexity. Lysine 1128 participates in a covalent cross-link: Glycyl lysine isopeptide (Lys-Gly) (interchain with G-Cter in SUMO2). Residues 1957–1962 (GVGKSL), glutamate 2060, alanine 2114, aspartate 2116, and arginine 2177 each bind ATP. Residue serine 2234 is modified to Phosphoserine. Residues lysine 2460 and serine 2535 each coordinate ATP. Positions 3435 to 3465 (EEMEIETSQSKELAEEQMEVEDSEEMKKASD) form a coiled coil. The Zn(2+) site is built by cysteine 3947, cysteine 3950, cysteine 3962, histidine 3964, cysteine 3967, cysteine 3970, cysteine 3982, cysteine 3985, cysteine 4451, and histidine 4455. The RING-type zinc finger occupies 3947–3986 (CFICHGDAQDPVCLPCDHVYCLRCIQTWLIPGQMMCPYCL). The RZ-type zinc-finger motif lies at 4429–4501 (MPEDLLVHAR…IRNNEDRTQT (73 aa)). Cysteine 4462 functions as the Nucleophile; for E3 ubiquitin-lipopolysaccharide ligase activity in the catalytic mechanism. Zn(2+)-binding residues include cysteine 4471 and cysteine 4474.

The protein belongs to the AAA ATPase family. As to quaternary structure, monomer. Interacts with UBE2L3/UBCH7; UBE2L3/UBCH7 is the most efficient ubiquitin-conjugating enzyme E2 for the ubiquitin ligase activity. Interacts with UBE2N/UBC13; promoting 'Lys-63'-linked ubiquitination of target proteins.

It is found in the cytoplasm. Its subcellular location is the cytosol. The protein localises to the lipid droplet. The catalysed reaction is S-ubiquitinyl-[E2 ubiquitin-conjugating enzyme]-L-cysteine + [acceptor protein]-L-lysine = [E2 ubiquitin-conjugating enzyme]-L-cysteine + N(6)-ubiquitinyl-[acceptor protein]-L-lysine.. It catalyses the reaction ATP + H2O = ADP + phosphate + H(+). Its pathway is protein modification; protein ubiquitination. Its function is as follows. Atypical E3 ubiquitin ligase that can catalyze ubiquitination of both proteins and lipids, and which is involved in various processes, such as lipid metabolism, angiogenesis and cell-autonomous immunity. Acts as a key immune sensor by catalyzing ubiquitination of the lipid A moiety of bacterial lipopolysaccharide (LPS) via its RZ-type zinc-finger: restricts the proliferation of cytosolic bacteria, such as Salmonella, by generating the bacterial ubiquitin coat through the ubiquitination of LPS. Also acts indirectly by mediating the recruitment of the LUBAC complex, which conjugates linear polyubiquitin chains. Ubiquitination of LPS triggers cell-autonomous immunity, such as antibacterial autophagy, leading to degradation of the microbial invader. Involved in lipid metabolism by regulating fat storage and lipid droplet formation; act by inhibiting the lipolytic process. Also regulates lipotoxicity by inhibiting desaturation of fatty acids. Also acts as an E3 ubiquitin-protein ligase via its RING-type zinc finger: mediates 'Lys-63'-linked ubiquitination of target proteins. Involved in the non-canonical Wnt signaling pathway in vascular development: acts by mediating ubiquitination and degradation of FLNA and NFATC2 downstream of RSPO3, leading to inhibit the non-canonical Wnt signaling pathway and promoting vessel regression. Also has ATPase activity; ATPase activity is required for ubiquitination of LPS. The chain is E3 ubiquitin-protein ligase RNF213 from Mus musculus (Mouse).